A 210-amino-acid polypeptide reads, in one-letter code: Redox-sensing transcriptional repressor Rex (210 aa).

A DNA-binding region (H-T-H motif) is located at residues 17 to 56; that stretch reads KYHRYLGNLMRNDVDRISSKELSEKIGFTASQIRQDLNCF. 91-96 provides a ligand contact to NAD(+); it reads GAGNIG.

Belongs to the transcriptional regulatory Rex family. In terms of assembly, homodimer.

It localises to the cytoplasm. Functionally, modulates transcription in response to changes in cellular NADH/NAD(+) redox state. The polypeptide is Redox-sensing transcriptional repressor Rex (Clostridium kluyveri (strain ATCC 8527 / DSM 555 / NBRC 12016 / NCIMB 10680 / K1)).